We begin with the raw amino-acid sequence, 268 residues long: Tryptophan synthase alpha chain (268 aa).

Catalysis depends on proton acceptor residues glutamate 47 and aspartate 58.

It belongs to the TrpA family. As to quaternary structure, tetramer of two alpha and two beta chains.

The protein resides in the plastid. It is found in the chloroplast. It catalyses the reaction (1S,2R)-1-C-(indol-3-yl)glycerol 3-phosphate + L-serine = D-glyceraldehyde 3-phosphate + L-tryptophan + H2O. It functions in the pathway amino-acid biosynthesis; L-tryptophan biosynthesis; L-tryptophan from chorismate: step 5/5. Functionally, the alpha subunit is responsible for the aldol cleavage of indoleglycerol phosphate to indole and glyceraldehyde 3-phosphate. The chain is Tryptophan synthase alpha chain from Gracilaria tenuistipitata var. liui (Red alga).